The following is a 278-amino-acid chain: MADAPAPAGGRGGFRGGFGGRGRGRGRGRGRGRGRGRGAKDGDKEWVPVTKLGRLVKDMKIKTLEEIYLFSLPIKEFEIIDFFLGDALKDEVLKIMPVQKQTRAGQRTRFKAFVAIGDYNGHVGLGVKCSKEVATAIRGAIILAKLSVVPVRRGYWGNKIGKPHTVPCKVTGKCGSVLVRLIPAPRGTGIVSAPVPKKLLAMAGIDDCYTSARGQTATLGNFAKATYAAIAATYSYLTPDLWRETVFTKSPYQEYTDYLAKHHGRGAVTAHPTEEKPF.

The segment at 1–43 (MADAPAPAGGRGGFRGGFGGRGRGRGRGRGRGRGRGRGAKDGD) is disordered. The span at 9–21 (GGRGGFRGGFGGR) shows a compositional bias: gly residues. Basic residues predominate over residues 22-37 (GRGRGRGRGRGRGRGR). An S5 DRBM domain is found at 88 to 151 (LKDEVLKIMP…ILAKLSVVPV (64 aa)).

This sequence belongs to the universal ribosomal protein uS5 family.

Component of the ribosome, a large ribonucleoprotein complex responsible for the synthesis of proteins in the cell. The small ribosomal subunit (SSU) binds messenger RNAs (mRNAs) and translates the encoded message by selecting cognate aminoacyl-transfer RNA (tRNA) molecules. The large subunit (LSU) contains the ribosomal catalytic site termed the peptidyl transferase center (PTC), which catalyzes the formation of peptide bonds, thereby polymerizing the amino acids delivered by tRNAs into a polypeptide chain. The nascent polypeptides leave the ribosome through a tunnel in the LSU and interact with protein factors that function in enzymatic processing, targeting, and the membrane insertion of nascent chains at the exit of the ribosomal tunnel. Plays a role in the assembly and function of the 40S ribosomal subunit. Mutations in this protein affects the control of translational fidelity. Involved in nucleolar processing of pre-18S ribosomal RNA and ribosome assembly. In Urechis caupo (Innkeeper worm), this protein is Small ribosomal subunit protein uS5 (RPS2).